A 190-amino-acid polypeptide reads, in one-letter code: MSRLRRFNRKILSLSSDYTHDGESDQEDVSILPLDTEEQEELIQKFETNAHITNKLYINLLSILYLLYGGLLMILVRKSRGYIKLALLAGANSLICSCITLRYDIVNDYLLFKKFKLRVSNFSINIINIILLVLMAWISFNHVVEDKKTVLCLQVPMFLFWVAVLVKRWARNIEDEIADLRCLKYKYKNA.

At 1–55 (MSRLRRFNRKILSLSSDYTHDGESDQEDVSILPLDTEEQEELIQKFETNAHITNK) the chain is on the cytoplasmic side. Residues 56 to 76 (LYINLLSILYLLYGGLLMILV) form a helical membrane-spanning segment. Over 77 to 80 (RKSR) the chain is Extracellular. A helical membrane pass occupies residues 81 to 101 (GYIKLALLAGANSLICSCITL). The Cytoplasmic segment spans residues 102–123 (RYDIVNDYLLFKKFKLRVSNFS). A helical membrane pass occupies residues 124 to 144 (INIINIILLVLMAWISFNHVV). The Extracellular portion of the chain corresponds to 145-149 (EDKKT). Residues 150 to 170 (VLCLQVPMFLFWVAVLVKRWA) traverse the membrane as a helical segment. Topologically, residues 171–190 (RNIEDEIADLRCLKYKYKNA) are cytoplasmic.

It localises to the membrane. This is an uncharacterized protein from Saccharomyces cerevisiae (strain ATCC 204508 / S288c) (Baker's yeast).